Reading from the N-terminus, the 350-residue chain is Phosphate acyltransferase (350 aa).

This sequence belongs to the PlsX family. Homodimer. Probably interacts with PlsY.

It is found in the cytoplasm. The enzyme catalyses a fatty acyl-[ACP] + phosphate = an acyl phosphate + holo-[ACP]. Its pathway is lipid metabolism; phospholipid metabolism. Functionally, catalyzes the reversible formation of acyl-phosphate (acyl-PO(4)) from acyl-[acyl-carrier-protein] (acyl-ACP). This enzyme utilizes acyl-ACP as fatty acyl donor, but not acyl-CoA. This Magnetococcus marinus (strain ATCC BAA-1437 / JCM 17883 / MC-1) protein is Phosphate acyltransferase.